Consider the following 143-residue polypeptide: MWLQNLLLLGTVVCSFSAPTRPPNTATRPWQHVDAIKEALSLLNHSSDTDAVMNDTEVVSEKFDSQEPTCLQTRLKLYKNGLQGSLTSLMGSLTMMATHYEKHCPPTPETSCGTQFISFKNFKEDLKEFLFIIPFDCWEPAQK.

The signal sequence occupies residues 1–17 (MWLQNLLLLGTVVCSFS). Thr27 is a glycosylation site (O-linked (GalNAc...) threonine). 2 N-linked (GlcNAc...) asparagine glycosylation sites follow: Asn44 and Asn54. 2 cysteine pairs are disulfide-bonded: Cys70–Cys112 and Cys104–Cys137.

This sequence belongs to the GM-CSF family. As to quaternary structure, monomer. The signaling GM-CSF receptor complex is a dodecamer of two head-to-head hexamers of two alpha, two beta, and two ligand subunits.

Its subcellular location is the secreted. Cytokine that stimulates the growth and differentiation of hematopoietic precursor cells from various lineages, including granulocytes, macrophages, eosinophils and erythrocytes. In Bos taurus (Bovine), this protein is Granulocyte-macrophage colony-stimulating factor (CSF2).